The following is a 154-amino-acid chain: uncharacterized protein (154 aa).

It localises to the mitochondrion. This is an uncharacterized protein from Arabidopsis thaliana (Mouse-ear cress).